The primary structure comprises 367 residues: MRFNEVLKDVSTYEAGKPIELVVREYGIDSKDVIKLASNENPYGTSPKVIAKIQELAKNMCLYPDDSMYELKDALAKKYNLESSNIIIGSGSDQILEFCIHAKCKKDSKILMAKTTFAMYEIYGKHVGAEIIKTNSEQHNLEEFSELYKKHGADIIFLCIPNNPLGECLDKNDVYEFLKTIDKNTLVVVDGAYQEYAAFKDEKKRICPKDLIDTFPNAIYLGTFSKAYSLGGMRVGYGFAQNEIIQNLYKIRAPFNITTLSLAAAIEALKDEEFVNDCISKNFEEMKRYEEYVTKKGFEYIPSYTNFITIKFGDKYVSKEVAQKLLERGMIVRDLTSYKQNAIRVTIGKPEQNTKLFQLLDEVLQNL.

N6-(pyridoxal phosphate)lysine is present on Lys226.

Belongs to the class-II pyridoxal-phosphate-dependent aminotransferase family. Histidinol-phosphate aminotransferase subfamily. In terms of assembly, homodimer. The cofactor is pyridoxal 5'-phosphate.

The enzyme catalyses L-histidinol phosphate + 2-oxoglutarate = 3-(imidazol-4-yl)-2-oxopropyl phosphate + L-glutamate. It participates in amino-acid biosynthesis; L-histidine biosynthesis; L-histidine from 5-phospho-alpha-D-ribose 1-diphosphate: step 7/9. In Aliarcobacter butzleri (strain RM4018) (Arcobacter butzleri), this protein is Histidinol-phosphate aminotransferase.